We begin with the raw amino-acid sequence, 253 residues long: Phosphoglycerate mutase 2 (253 aa).

Position 3 is a phosphothreonine (threonine 3). Substrate-binding positions include 10–17, 23–24, arginine 62, 89–92, lysine 100, and 116–117; these read RHGESTWN, CG, ERHY, and RR. Histidine 11 functions as the Tele-phosphohistidine intermediate in the catalytic mechanism. Residue serine 14 is modified to Phosphoserine. Glutamate 89 functions as the Proton donor/acceptor in the catalytic mechanism. Phosphoserine is present on serine 118. Tyrosine 132 and tyrosine 133 each carry phosphotyrosine. Serine 135 is modified (phosphoserine). The residue at position 152 (threonine 152) is a Phosphothreonine. Residue 187–188 coordinates substrate; the sequence is GN.

It belongs to the phosphoglycerate mutase family. BPG-dependent PGAM subfamily. Homodimer.

The enzyme catalyses (2R)-2-phosphoglycerate = (2R)-3-phosphoglycerate. It carries out the reaction (2R)-3-phospho-glyceroyl phosphate = (2R)-2,3-bisphosphoglycerate + H(+). Functionally, interconversion of 3- and 2-phosphoglycerate with 2,3-bisphosphoglycerate as the primer of the reaction. Can also catalyze the reaction of EC 5.4.2.4 (synthase), but with a reduced activity. The polypeptide is Phosphoglycerate mutase 2 (PGAM2) (Bos taurus (Bovine)).